Consider the following 396-residue polypeptide: Phosphoglycerate kinase (396 aa).

Substrate-binding positions include 21 to 23, Arg36, 59 to 62, Arg113, and Arg146; these read DLN and HLGR. ATP contacts are provided by residues Lys197, Glu319, and 345–348; that span reads GGDT.

The protein belongs to the phosphoglycerate kinase family. As to quaternary structure, monomer.

Its subcellular location is the cytoplasm. The enzyme catalyses (2R)-3-phosphoglycerate + ATP = (2R)-3-phospho-glyceroyl phosphate + ADP. It functions in the pathway carbohydrate degradation; glycolysis; pyruvate from D-glyceraldehyde 3-phosphate: step 2/5. This is Phosphoglycerate kinase from Legionella pneumophila (strain Lens).